The following is a 258-amino-acid chain: Acyl-[acyl-carrier-protein]--UDP-N-acetylglucosamine O-acyltransferase (258 aa).

This sequence belongs to the transferase hexapeptide repeat family. LpxA subfamily. In terms of assembly, homotrimer.

It localises to the cytoplasm. It catalyses the reaction a (3R)-hydroxyacyl-[ACP] + UDP-N-acetyl-alpha-D-glucosamine = a UDP-3-O-[(3R)-3-hydroxyacyl]-N-acetyl-alpha-D-glucosamine + holo-[ACP]. Its pathway is glycolipid biosynthesis; lipid IV(A) biosynthesis; lipid IV(A) from (3R)-3-hydroxytetradecanoyl-[acyl-carrier-protein] and UDP-N-acetyl-alpha-D-glucosamine: step 1/6. Its function is as follows. Involved in the biosynthesis of lipid A, a phosphorylated glycolipid that anchors the lipopolysaccharide to the outer membrane of the cell. The protein is Acyl-[acyl-carrier-protein]--UDP-N-acetylglucosamine O-acyltransferase of Saccharophagus degradans (strain 2-40 / ATCC 43961 / DSM 17024).